Here is a 198-residue protein sequence, read N- to C-terminus: ATP-dependent Clp protease proteolytic subunit (198 aa).

The Nucleophile role is filled by S98. The active site involves H123.

Belongs to the peptidase S14 family. Fourteen ClpP subunits assemble into 2 heptameric rings which stack back to back to give a disk-like structure with a central cavity, resembling the structure of eukaryotic proteasomes.

It localises to the cytoplasm. It carries out the reaction Hydrolysis of proteins to small peptides in the presence of ATP and magnesium. alpha-casein is the usual test substrate. In the absence of ATP, only oligopeptides shorter than five residues are hydrolyzed (such as succinyl-Leu-Tyr-|-NHMec, and Leu-Tyr-Leu-|-Tyr-Trp, in which cleavage of the -Tyr-|-Leu- and -Tyr-|-Trp bonds also occurs).. Its function is as follows. Cleaves peptides in various proteins in a process that requires ATP hydrolysis. Has a chymotrypsin-like activity. Plays a major role in the degradation of misfolded proteins. This Ehrlichia ruminantium (strain Welgevonden) protein is ATP-dependent Clp protease proteolytic subunit.